A 375-amino-acid polypeptide reads, in one-letter code: CLIP domain-containing serine protease B14 (375 aa).

An N-terminal signal peptide occupies residues 1–24 (MYSRRYVACGLLCLLVIAIDQGHG). Residues 29–83 (PCTTPNGTAGRCVRVRECGYVLDLLRKDLFAHSDTVHLEGLQCGTRPDGGALVCC) enclose the Clip domain. 3 disulfides stabilise this stretch: C30-C82, C40-C71, and C46-C83. N34 carries N-linked (GlcNAc...) asparagine glycosylation. In terms of domain architecture, Peptidase S1 spans 101–370 (IIGGNDTELG…YMGWLEREMF (270 aa)). The N-linked (GlcNAc...) asparagine glycan is linked to N105. An intrachain disulfide couples C131 to C147. Catalysis depends on charge relay system residues H146 and D213. N-linked (GlcNAc...) asparagine glycosylation occurs at N238. Intrachain disulfides connect C289-C307 and C317-C346. Catalysis depends on S321, which acts as the Charge relay system. N357 is a glycosylation site (N-linked (GlcNAc...) asparagine).

Belongs to the peptidase S1 family. CLIP subfamily. Post-translationally, N-glycosylated. In terms of processing, proteolytically cleaved. Expressed by a subpopulation of hemocytes.

It localises to the secreted. Functionally, serine protease. Plays a role in innate immunity against infections by parasite P.berghei and by Gram-negative bacteria such as E.coli. In response to P.berghei infection, contributes to the clearing of parasite ookinetes independent of melanization, an innate immune response which consists in the deposition of melanin pigments on invading pathogens and parasites. May play a role in non-septic wound healing. This is CLIP domain-containing serine protease B14 from Anopheles gambiae (African malaria mosquito).